The primary structure comprises 175 residues: ATP synthase subunit delta (175 aa).

This sequence belongs to the ATPase delta chain family. As to quaternary structure, F-type ATPases have 2 components, F(1) - the catalytic core - and F(0) - the membrane proton channel. F(1) has five subunits: alpha(3), beta(3), gamma(1), delta(1), epsilon(1). F(0) has three main subunits: a(1), b(2) and c(10-14). The alpha and beta chains form an alternating ring which encloses part of the gamma chain. F(1) is attached to F(0) by a central stalk formed by the gamma and epsilon chains, while a peripheral stalk is formed by the delta and b chains.

It is found in the cell inner membrane. Functionally, f(1)F(0) ATP synthase produces ATP from ADP in the presence of a proton or sodium gradient. F-type ATPases consist of two structural domains, F(1) containing the extramembraneous catalytic core and F(0) containing the membrane proton channel, linked together by a central stalk and a peripheral stalk. During catalysis, ATP synthesis in the catalytic domain of F(1) is coupled via a rotary mechanism of the central stalk subunits to proton translocation. In terms of biological role, this protein is part of the stalk that links CF(0) to CF(1). It either transmits conformational changes from CF(0) to CF(1) or is implicated in proton conduction. This is ATP synthase subunit delta from Sulfurovum sp. (strain NBC37-1).